The following is a 1612-amino-acid chain: MAKSSLAGSDGALTWVNNATKKEELETANKNDSTKKLSVERVYQKKTQLEHILLRPDTYIGSVEPLTQLMWVYDEDVGMNCREVTFVPGLYKIFDEILVNAADNKQRDKNMTCIKVSIDPESNIISIWNNGKGIPVVEHKVEKVYVPALIFGQLLTSSNYDDDEKKVTGGRNGYGAKLCNIFSTKFTVETACKEYKHSFKQTWMNNMMKTSEAKIKHFDGEDYTCITFQPDLSKFKMEKLDKDIVALMTRRAYDLAGSCKGVKVMFNGKKLPVNGFRSYVDLYVKDKLDETGVALKVIHELANERWDVCLTLSEKGFQQISFVNSIATTKGGRHVDYVVDQVVSKLIEVVKKKNKAGVSVKPFQVKNHIWVFINCLIENPTFDSQTKENMTLQPKSFGSKCQLSEKFFKAASNCGIVESILNWVKFKAQTQLNKKCSSVKYSKIKGIPKLDDANDAGGKHSLECTLILTEGDSAKSLAVSGLGVIGRDRYGVFPLRGKILNVREASHKQIMENAEINNIIKIVGLQYKKSYDDAESLKTLRYGKIMIMTDQDQDGSHIKGLLINFIHHNWPSLLKHGFLEEFITPIVKASKNKQELSFYSIPEFDEWKKHIENQKAWKIKYYKGLGTSTAKEAKEYFADMERHRILFRYAGPEDDAAITLAFSKKKIDDRKEWLTNFMEDRRQRRLHGLPEQFLYGTATKHLTYNDFINKELILFSNSDNERSIPSLVDGFKPGQRKVLFTCFKRNDKREVKVAQLAGSVAEMSAYHHGEQALMMTIVNLAQNFVGSNNINLLQPIGQFGTRLHGGKDAASPRYIFTMLSSLARLLFPAVDDNLLKFLYDDNQRVEPEWYIPIIPMVLINGAEGIGTGWACKLPNYDAREIVNNVRRMLEGLDPHPMLPNYKNFKGTIQELGQNQYAVSGEIFVVDRNTVEITELPVRTWTQVYKEQVLEPMLNGTDKTPALISDYKEYHTDTTVKFVVKMTEEKLAQAEAAGLHKVFKLQTTLTCNSMVLFDHMGCLKKYETVQDILKEFFDLRLSYYGLRKEWLVGMLGAESTKLNNQARFILEKIQGKITIENRSKKDLIQMLVQRGYESDPVKAWKEAQEKAAEEEDSQNQHDDSSSDSGTPSGPDFNYILNMSLWSLTKEKVEELIKQRDTKGREVNDLKRKSPSDLWKEDLAAFVEELDKVEAQEREDILAGMSGKAIKGKVGKPKVKKLQLEETMPSPYGRRIVPEITAMKADASRKLLKKKKGDPDTTVVKVEFDEEFSGTPAEGTGEETLTPSAPVNKGPKPKREKKEPGTRVRKTPTSTGKTNAKKVKKRNPWSDDESKSESDLEEAEPVVIPRDSLLRRAAAERPKYTFDFSEEEDDDAAAADDSNDLEELKVKASPITNDGEDEFVPSDGLDKDEYAFSSGKSKATPEKSSNDKKSQDFGNLFSFPSYSQKSEDDSAKFDSNEEDTASVFAPSFGLKQTDKLPSKTVAAKKGKPPSDTAPKAKRAPKQKKIVETINSDSDSEFGIPKKTTTPKGKGRGAKKRKASGSENEGDYNPGRKPSKTASKKPKKTSFDQDSDVDIFPSDFTSEPPALPRTGRARKEVKYFAESDEEEDVDFAMFN.

N-acetylalanine is present on alanine 2. Residue lysine 3 is modified to N6-acetyllysine. Glycyl lysine isopeptide (Lys-Gly) (interchain with G-Cter in SUMO2) cross-links involve residues lysine 21 and lysine 22. Residues asparagine 100, asparagine 129, and 157-159 contribute to the ATP site; that span reads SSN. Glycyl lysine isopeptide (Lys-Gly) (interchain with G-Cter in SUMO2) cross-links involve residues lysine 165 and lysine 166. 170 to 177 serves as a coordination point for ATP; sequence GRNGYGAK. Glycyl lysine isopeptide (Lys-Gly) (interchain with G-Cter in SUMO2) cross-links involve residues lysine 216 and lysine 287. Positions 351 to 353 are interaction with DNA; the sequence is KKK. Glycyl lysine isopeptide (Lys-Gly) (interchain with G-Cter in SUMO2) cross-links involve residues lysine 355 and lysine 361. 385–387 contacts ATP; it reads QTK. Glycyl lysine isopeptide (Lys-Gly) (interchain with G-Cter in SUMO2) cross-links involve residues lysine 425, lysine 427, and lysine 434. In terms of domain architecture, Toprim spans 464–581; that stretch reads CTLILTEGDS…SLLKHGFLEE (118 aa). The Mg(2+) site is built by glutamate 470, aspartate 550, and aspartate 552. Glycyl lysine isopeptide (Lys-Gly) (interchain with G-Cter in SUMO2) cross-links involve residues lysine 588, lysine 593, lysine 623, lysine 631, lysine 634, lysine 664, and lysine 700. Residues 724–1177 enclose the Topo IIA-type catalytic domain; it reads IPSLVDGFKP…SPSDLWKEDL (454 aa). Tyrosine 814 functions as the O-(5'-phospho-DNA)-tyrosine intermediate in the catalytic mechanism. The interaction with DNA stretch occupies residues 999 to 1008; that stretch reads KLQTTLTCNS. Lysine 1080 is covalently cross-linked (Glycyl lysine isopeptide (Lys-Gly) (interchain with G-Cter in SUMO2)). The tract at residues 1098–1128 is disordered; that stretch reads AWKEAQEKAAEEEDSQNQHDDSSSDSGTPSG. Residues lysine 1202, lysine 1205, lysine 1214, and lysine 1215 each participate in a glycyl lysine isopeptide (Lys-Gly) (interchain with G-Cter in SUMO2) cross-link. Serine 1224 carries the phosphoserine modification. Residues lysine 1238, lysine 1250, and lysine 1259 each participate in a glycyl lysine isopeptide (Lys-Gly) (interchain with G-Cter in SUMO2) cross-link. The tract at residues 1245–1586 is disordered; that stretch reads LLKKKKGDPD…FTSEPPALPR (342 aa). Residue threonine 1280 is modified to Phosphothreonine. Glycyl lysine isopeptide (Lys-Gly) (interchain with G-Cter in SUMO2) cross-links involve residues lysine 1311 and lysine 1315. Basic and acidic residues-rich tracts occupy residues 1322–1332 and 1346–1358; these read PWSDDESKSES and SLLRRAAAERPKY. Phosphoserine is present on residues serine 1324, serine 1328, serine 1330, serine 1332, and serine 1346. Residue tyrosine 1358 is modified to Phosphotyrosine. A compositionally biased stretch (acidic residues) spans 1362-1379; sequence FSEEEDDDAAAADDSNDL. Residues serine 1363 and serine 1376 each carry the phosphoserine modification. Lysine 1385 is covalently cross-linked (Glycyl lysine isopeptide (Lys-Gly) (interchain with G-Cter in SUMO2)). Phosphoserine is present on serine 1387. Phosphothreonine is present on threonine 1390. A Phosphoserine modification is found at serine 1400. Tyrosine 1408 bears the Phosphotyrosine mark. Residue serine 1411 is modified to Phosphoserine. Over residues 1417-1429 the composition is skewed to basic and acidic residues; sequence ATPEKSSNDKKSQ. Lysine 1427 is covalently cross-linked (Glycyl lysine isopeptide (Lys-Gly) (interchain with G-Cter in SUMO2)). Phosphoserine is present on residues serine 1428, serine 1439, and serine 1441. Lysine 1443 is covalently cross-linked (Glycyl lysine isopeptide (Lys-Gly) (interchain with G-Cter in SUMO2)). The span at 1443–1453 shows a compositional bias: basic and acidic residues; sequence KSEDDSAKFDS. Residues serine 1448, serine 1453, and serine 1460 each carry the phosphoserine modification. Lysine 1477 is covalently cross-linked (Glycyl lysine isopeptide (Lys-Gly) (interchain with G-Cter in SUMO2)). Residues 1493-1499 are interaction with PLSCR1; sequence KAKRAPK. Phosphoserine occurs at positions 1509, 1511, and 1513. The span at 1526–1536 shows a compositional bias: basic residues; that stretch reads GKGRGAKKRKA. Serine 1537 and serine 1539 each carry phosphoserine. Residues 1550–1561 show a composition bias toward basic residues; it reads KPSKTASKKPKK. Residue threonine 1562 is modified to Phosphothreonine. Serine 1563 and serine 1568 each carry phosphoserine. Tyrosine 1596 is modified (phosphotyrosine). Phosphoserine is present on serine 1600.

Belongs to the type II topoisomerase family. As to quaternary structure, homodimer. Interacts with KIAA1210. Interacts with PLSCR1. Requires Mg(2+) as cofactor. It depends on Mn(2+) as a cofactor. Ca(2+) is required as a cofactor.

The protein resides in the nucleus. It is found in the nucleolus. Its subcellular location is the nucleoplasm. It catalyses the reaction ATP-dependent breakage, passage and rejoining of double-stranded DNA.. Functionally, key decatenating enzyme that alters DNA topology by binding to two double-stranded DNA molecules, generating a double-stranded break in one of the strands, passing the intact strand through the broken strand, and religating the broken strand. Plays a role in B-cell differentiation. The chain is DNA topoisomerase 2-beta (Top2b) from Mus musculus (Mouse).